We begin with the raw amino-acid sequence, 873 residues long: DNA helicase/primase complex-associated protein (873 aa).

Residues 394-422 (PPLPRDDGDGENNVVEVSSSTGGAHPPSD) are disordered.

This sequence belongs to the herpesviridae HEPA family. Associates with the primase and the helicase to form the helicase-primase complex. Interacts with the origin-binding protein. Interacts with the polymerase catalytic subunit.

The protein localises to the host nucleus. In terms of biological role, component of the helicase/primase complex. Unwinds the DNA at the replication forks and generates single-stranded DNA for both leading and lagging strand synthesis. The primase synthesizes short RNA primers on the lagging strand that the polymerase presumably elongates using dNTPs. The primase-associated factor has no known catalytic activity in the complex and may serve to facilitate the formation of the replisome by directly interacting with the origin-binding protein and the polymerase. The chain is DNA helicase/primase complex-associated protein (UL102) from Human cytomegalovirus (strain Merlin) (HHV-5).